A 409-amino-acid chain; its full sequence is Serine/threonine transporter SstT (409 aa).

9 helical membrane-spanning segments follow: residues 14-34, 48-68, 82-102, 141-161, 192-212, 216-236, 290-310, 322-342, and 357-377; these read GSLVLQILVGIIAGIIVATLS, FVGALKAIAPILVFILVAASI, IVILYLFGTFAAAVTAVLMSF, ALMTGNYIGILAWGVGLGLAL, IGIFGLVSSTFASTGFSAIAG, LLLVLLGAMAIMALIINPAIV, IPLGATINMGGAAITITILTL, ILTAILLSVVAGISACGASGV, and FGISNDIAMQVVAVGFIIGVI.

Belongs to the dicarboxylate/amino acid:cation symporter (DAACS) (TC 2.A.23) family.

The protein resides in the cell inner membrane. The catalysed reaction is L-serine(in) + Na(+)(in) = L-serine(out) + Na(+)(out). It carries out the reaction L-threonine(in) + Na(+)(in) = L-threonine(out) + Na(+)(out). Involved in the import of serine and threonine into the cell, with the concomitant import of sodium (symport system). This is Serine/threonine transporter SstT from Shewanella woodyi (strain ATCC 51908 / MS32).